The following is a 495-amino-acid chain: Calcium-dependent protein kinase 11 (495 aa).

A Protein kinase domain is found at 26–284 (YLLGKKLGQG…AHEALCHPWI (259 aa)). Residues 32–40 (LGQGQFGTT) and Lys-55 contribute to the ATP site. Asp-150 functions as the Proton acceptor in the catalytic mechanism. Phosphoserine is present on Ser-190. Residues 290 to 320 (APDKPLDPAVLSRLKQFSQMNKIKKMALRVI) are autoinhibitory domain. 4 consecutive EF-hand domains span residues 327–362 (EEIG…VGSE), 363–398 (LMES…MNKM), 399–434 (EREE…FGLC), and 438–468 (LDDM…GDGV). Ca(2+) is bound by residues Asp-340, Asp-342, Ser-344, Thr-346, Glu-351, Asp-376, Asp-378, Ser-380, Thr-382, Glu-387, Asp-412, Asp-414, Ser-416, Tyr-418, Glu-423, Asp-446, Asp-448, Asp-450, Lys-452, and Glu-457.

This sequence belongs to the protein kinase superfamily. Ser/Thr protein kinase family. CDPK subfamily. As to quaternary structure, interacts with Di19.

Its subcellular location is the cytoplasm. It is found in the nucleus. The enzyme catalyses L-seryl-[protein] + ATP = O-phospho-L-seryl-[protein] + ADP + H(+). The catalysed reaction is L-threonyl-[protein] + ATP = O-phospho-L-threonyl-[protein] + ADP + H(+). Activated by calcium. Autophosphorylation may play an important role in the regulation of the kinase activity. In terms of biological role, may play a role in signal transduction pathways that involve calcium as a second messenger. Functions as a regulator of the calcium-mediated abscisic acid (ABA) signaling pathway. Phosphorylates ABA-responsive transcription factors ABF1 and ABF4 in vitro. The sequence is that of Calcium-dependent protein kinase 11 (CPK11) from Arabidopsis thaliana (Mouse-ear cress).